The primary structure comprises 341 residues: Radial spoke head 14 homolog (341 aa).

ARM repeat units lie at residues 16–55 (PTKAAIAYGCRALSKLNEELQSRDLLTRQKALVALCDLMH), 57–96 (PEYVYEAINIGCLESLKTLLQDDDNLVRIKTTEVLYIMAT), 99–138 (VGRVGFLKHDIIQALSLLLSDHQTLCRENLHQAYKHLAQL), 139–178 (PKGAQGIVQSGLIPSLVRKLQKEEDHIQEIILDTLALCLQ), 180–217 (DATEALESQAVPCLKEKLLSQNSEIRSKAARALIAISI), 219–258 (LDGKNQVWKNKVIPILVTLLSDTDEEVKANAAGALMHATV), 260–300 (TEGK…MLAE), and 302–339 (PEGRKLLLSHVPIFRYLLAHKNEAIQRAAEVAIKVIEW).

It belongs to the flagellar radial spoke RSP14 family. Component of the axonemal radial spoke complex 1 (RS1), at least composed of spoke head proteins RSPH1, RSPH3, RSPH9 and the cilia-specific component RSPH4A or sperm-specific component RSPH6A, spoke stalk proteins RSPH14, DNAJB13, DYDC1, ROPN1L and NME5, and the anchor protein IQUB.

Its subcellular location is the cytoplasm. It is found in the cytoskeleton. The protein localises to the flagellum axoneme. Its function is as follows. Functions as part of axonemal radial spoke complexes that play an important part in the motility of sperm and cilia. This is Radial spoke head 14 homolog from Mus musculus (Mouse).